The sequence spans 231 residues: 5'-methylthioadenosine/S-adenosylhomocysteine nucleosidase (231 aa).

Glu-12 acts as the Proton acceptor in catalysis. Substrate is bound by residues Gly-78, Val-153, and Met-174 to Glu-175. The active-site Proton donor is Asp-198.

Belongs to the PNP/UDP phosphorylase family. MtnN subfamily.

It carries out the reaction S-adenosyl-L-homocysteine + H2O = S-(5-deoxy-D-ribos-5-yl)-L-homocysteine + adenine. The enzyme catalyses S-methyl-5'-thioadenosine + H2O = 5-(methylsulfanyl)-D-ribose + adenine. The catalysed reaction is 5'-deoxyadenosine + H2O = 5-deoxy-D-ribose + adenine. It functions in the pathway amino-acid biosynthesis; L-methionine biosynthesis via salvage pathway; S-methyl-5-thio-alpha-D-ribose 1-phosphate from S-methyl-5'-thioadenosine (hydrolase route): step 1/2. Catalyzes the irreversible cleavage of the glycosidic bond in both 5'-methylthioadenosine (MTA) and S-adenosylhomocysteine (SAH/AdoHcy) to adenine and the corresponding thioribose, 5'-methylthioribose and S-ribosylhomocysteine, respectively. Also cleaves 5'-deoxyadenosine, a toxic by-product of radical S-adenosylmethionine (SAM) enzymes, into 5-deoxyribose and adenine. This is 5'-methylthioadenosine/S-adenosylhomocysteine nucleosidase from Vibrio parahaemolyticus serotype O3:K6 (strain RIMD 2210633).